Here is a 200-residue protein sequence, read N- to C-terminus: 3-isopropylmalate dehydratase small subunit (200 aa).

It belongs to the LeuD family. LeuD type 1 subfamily. As to quaternary structure, heterodimer of LeuC and LeuD.

It carries out the reaction (2R,3S)-3-isopropylmalate = (2S)-2-isopropylmalate. The protein operates within amino-acid biosynthesis; L-leucine biosynthesis; L-leucine from 3-methyl-2-oxobutanoate: step 2/4. Catalyzes the isomerization between 2-isopropylmalate and 3-isopropylmalate, via the formation of 2-isopropylmaleate. This Vibrio campbellii (strain ATCC BAA-1116) protein is 3-isopropylmalate dehydratase small subunit.